A 436-amino-acid chain; its full sequence is uncharacterized protein (436 aa).

Residues 1 to 21 (MILLQVICTIWTCLFIPLLNA) form a helical membrane-spanning segment. BNR repeat units follow at residues 57–68 (WISSDSGENWEA) and 101–112 (YVTDDRGKSWRA). Residue Asn157 is glycosylated (N-linked (GlcNAc...) asparagine). BNR repeat units follow at residues 229-240 (ALSTDGGKTFKK) and 394-405 (KISVDNGLTWSN).

It localises to the membrane. This is an uncharacterized protein from Saccharomyces cerevisiae (strain ATCC 204508 / S288c) (Baker's yeast).